The sequence spans 377 residues: DNA-directed RNA polymerase subunit alpha (377 aa).

Residues 1–259 (MSDSSHNLLY…KHFSVFEKMD (259 aa)) are alpha N-terminal domain (alpha-NTD). The interval 276–377 (KDDILHKLVL…KIRLSKNTKG (102 aa)) is alpha C-terminal domain (alpha-CTD).

The protein belongs to the RNA polymerase alpha chain family. In terms of assembly, homodimer. The RNAP catalytic core consists of 2 alpha, 1 beta, 1 beta' and 1 omega subunit. When a sigma factor is associated with the core the holoenzyme is formed, which can initiate transcription.

It carries out the reaction RNA(n) + a ribonucleoside 5'-triphosphate = RNA(n+1) + diphosphate. Its function is as follows. DNA-dependent RNA polymerase catalyzes the transcription of DNA into RNA using the four ribonucleoside triphosphates as substrates. This Chlamydia trachomatis serovar A (strain ATCC VR-571B / DSM 19440 / HAR-13) protein is DNA-directed RNA polymerase subunit alpha.